The following is a 149-amino-acid chain: Large ribosomal subunit protein uL13 (149 aa).

The protein belongs to the universal ribosomal protein uL13 family. As to quaternary structure, part of the 50S ribosomal subunit.

Its function is as follows. This protein is one of the early assembly proteins of the 50S ribosomal subunit, although it is not seen to bind rRNA by itself. It is important during the early stages of 50S assembly. This chain is Large ribosomal subunit protein uL13, found in Bifidobacterium adolescentis (strain ATCC 15703 / DSM 20083 / NCTC 11814 / E194a).